We begin with the raw amino-acid sequence, 208 residues long: Small ribosomal subunit protein uS4 (208 aa).

Residues 95-159 (TIIDNIVYRA…LKKLIGSNIE (65 aa)) form the S4 RNA-binding domain.

This sequence belongs to the universal ribosomal protein uS4 family. Part of the 30S ribosomal subunit. Contacts protein S5. The interaction surface between S4 and S5 is involved in control of translational fidelity.

Functionally, one of the primary rRNA binding proteins, it binds directly to 16S rRNA where it nucleates assembly of the body of the 30S subunit. Its function is as follows. With S5 and S12 plays an important role in translational accuracy. The sequence is that of Small ribosomal subunit protein uS4 from Borreliella afzelii (strain PKo) (Borrelia afzelii).